Here is a 284-residue protein sequence, read N- to C-terminus: Four and a half LIM domains protein 5 (284 aa).

The segment at 8-32 (CQYCTASLLGKKYVLKDDNLYCISC) adopts a C4-type zinc-finger fold. 4 consecutive LIM zinc-binding domains span residues 39-100 (NYCE…ECSS), 101-160 (KCFH…KEFA), 161-220 (HYCN…LYAK), and 221-283 (KCAA…ADTD).

As to quaternary structure, interacts with CREM (via the third LIM domain). Interacts (via second LIM domain) with SPAG8.

It is found in the nucleus. In terms of biological role, may be involved in the regulation of spermatogenesis. Stimulates CREM transcriptional activity in a phosphorylation-independent manner. This is Four and a half LIM domains protein 5 (Fhl5) from Rattus norvegicus (Rat).